We begin with the raw amino-acid sequence, 465 residues long: tRNA modification GTPase MnmE (465 aa).

The (6S)-5-formyl-5,6,7,8-tetrahydrofolate site is built by Arg-25, Glu-87, and Arg-126. One can recognise a TrmE-type G domain in the interval 222–386 (TIRVVLRGLP…LIERLVQFAE (165 aa)). GTP is bound by residues 232-237 (NAGKSR), 251-257 (TDQAGTT), and 276-279 (DTAG). Mg(2+) is bound by residues Ser-236 and Thr-257. Lys-465 is a binding site for (6S)-5-formyl-5,6,7,8-tetrahydrofolate.

It belongs to the TRAFAC class TrmE-Era-EngA-EngB-Septin-like GTPase superfamily. TrmE GTPase family. Homodimer. Heterotetramer of two MnmE and two MnmG subunits. K(+) is required as a cofactor.

The protein resides in the cytoplasm. Its function is as follows. Exhibits a very high intrinsic GTPase hydrolysis rate. Involved in the addition of a carboxymethylaminomethyl (cmnm) group at the wobble position (U34) of certain tRNAs, forming tRNA-cmnm(5)s(2)U34. This is tRNA modification GTPase MnmE from Rhodopirellula baltica (strain DSM 10527 / NCIMB 13988 / SH1).